A 42-amino-acid chain; its full sequence is Photosystem I reaction center subunit IX (42 aa).

Residues 7–27 (YLSVAPVLSTLWFVSLAGLLI) form a helical membrane-spanning segment.

Belongs to the PsaJ family.

Its subcellular location is the plastid. It is found in the chloroplast thylakoid membrane. In terms of biological role, may help in the organization of the PsaE and PsaF subunits. The sequence is that of Photosystem I reaction center subunit IX from Capsella bursa-pastoris (Shepherd's purse).